Consider the following 306-residue polypeptide: D-alanine--D-alanine ligase (306 aa).

The region spanning 101-303 is the ATP-grasp domain; the sequence is KYLWQGCGLP…FSQLVARILE (203 aa). 134–189 is an ATP binding site; it reads IDALGLPLFVKPSREGSSVGISRVNQASELQAALQEAFRFDDEVLVEAFLSGPEYT. Residues aspartate 257, glutamate 270, and asparagine 272 each coordinate Mg(2+).

Belongs to the D-alanine--D-alanine ligase family. Requires Mg(2+) as cofactor. The cofactor is Mn(2+).

The protein resides in the cytoplasm. It carries out the reaction 2 D-alanine + ATP = D-alanyl-D-alanine + ADP + phosphate + H(+). It functions in the pathway cell wall biogenesis; peptidoglycan biosynthesis. Functionally, cell wall formation. The polypeptide is D-alanine--D-alanine ligase (Erwinia tasmaniensis (strain DSM 17950 / CFBP 7177 / CIP 109463 / NCPPB 4357 / Et1/99)).